A 145-amino-acid chain; its full sequence is Basic phospholipase A2 beta-bungarotoxin A-AL1 chain (145 aa).

Positions 1–17 are cleaved as a signal peptide; that stretch reads MLIFLWCGAVCVSLLGA. Positions 18–25 are excised as a propeptide; the sequence is ANIPPHPL. 5 disulfides stabilise this stretch: C52–C144, C54–C70, C76–C118, C86–C111, and C104–C116. Ca(2+) is bound by residues Y53, G55, and G57. H73 is an active-site residue. D119 is an active-site residue.

Belongs to the phospholipase A2 family. Group I subfamily. G49 sub-subfamily. As to quaternary structure, heterodimer; disulfide-linked. The A chains have phospholipase A2 activity and the B chains show homology with the basic protease inhibitors. Ca(2+) is required as a cofactor. In terms of processing, this enzyme lacks one of the seven disulfide bonds found in similar PLA2 proteins. As to expression, expressed by the venom gland.

The protein localises to the secreted. The enzyme catalyses a 1,2-diacyl-sn-glycero-3-phosphocholine + H2O = a 1-acyl-sn-glycero-3-phosphocholine + a fatty acid + H(+). Snake venom phospholipase A2 (PLA2) that inhibits neuromuscular transmission by blocking acetylcholine release from the nerve termini. PLA2 catalyzes the calcium-dependent hydrolysis of the 2-acyl groups in 3-sn-phosphoglycerides. The chain is Basic phospholipase A2 beta-bungarotoxin A-AL1 chain from Bungarus multicinctus (Many-banded krait).